The chain runs to 347 residues: Holliday junction branch migration complex subunit RuvB (347 aa).

Positions 1 to 183 are large ATPase domain (RuvB-L); sequence MSEERFVSGH…FGVVLQLQFY (183 aa). ATP contacts are provided by residues Leu22, Arg23, Gly64, Lys67, Thr68, Thr69, 130–132, Arg173, Tyr183, and Arg220; that span reads EDF. Residue Thr68 coordinates Mg(2+). A small ATPAse domain (RuvB-S) region spans residues 184-254; sequence SEEELTRILM…VADAGLRMMG (71 aa). The segment at 257–347 is head domain (RuvB-H); the sequence is AMGLDTVDHK…PEGPVQPRLF (91 aa). Residues Arg312 and Arg317 each contribute to the DNA site.

It belongs to the RuvB family. As to quaternary structure, homohexamer. Forms an RuvA(8)-RuvB(12)-Holliday junction (HJ) complex. HJ DNA is sandwiched between 2 RuvA tetramers; dsDNA enters through RuvA and exits via RuvB. An RuvB hexamer assembles on each DNA strand where it exits the tetramer. Each RuvB hexamer is contacted by two RuvA subunits (via domain III) on 2 adjacent RuvB subunits; this complex drives branch migration. In the full resolvosome a probable DNA-RuvA(4)-RuvB(12)-RuvC(2) complex forms which resolves the HJ.

It localises to the cytoplasm. It carries out the reaction ATP + H2O = ADP + phosphate + H(+). Its function is as follows. The RuvA-RuvB-RuvC complex processes Holliday junction (HJ) DNA during genetic recombination and DNA repair, while the RuvA-RuvB complex plays an important role in the rescue of blocked DNA replication forks via replication fork reversal (RFR). RuvA specifically binds to HJ cruciform DNA, conferring on it an open structure. The RuvB hexamer acts as an ATP-dependent pump, pulling dsDNA into and through the RuvAB complex. RuvB forms 2 homohexamers on either side of HJ DNA bound by 1 or 2 RuvA tetramers; 4 subunits per hexamer contact DNA at a time. Coordinated motions by a converter formed by DNA-disengaged RuvB subunits stimulates ATP hydrolysis and nucleotide exchange. Immobilization of the converter enables RuvB to convert the ATP-contained energy into a lever motion, pulling 2 nucleotides of DNA out of the RuvA tetramer per ATP hydrolyzed, thus driving DNA branch migration. The RuvB motors rotate together with the DNA substrate, which together with the progressing nucleotide cycle form the mechanistic basis for DNA recombination by continuous HJ branch migration. Branch migration allows RuvC to scan DNA until it finds its consensus sequence, where it cleaves and resolves cruciform DNA. The chain is Holliday junction branch migration complex subunit RuvB from Symbiobacterium thermophilum (strain DSM 24528 / JCM 14929 / IAM 14863 / T).